The sequence spans 430 residues: MLDPNLLRNEPDAVAEKLARRGFKLDVDKLGALEERRKVLQVKTENLQAERNSRSKSIGQAKARGEDIESLRLEVNKLGEELDAAKAELDALQAEIRDIALTIPNLPADEVPVGKDENDNVEVSRWGTPREFDFEVRDHVTLGEMHSGLDFAAAVKLTGSRFVVMKGQIARMHRALSQFMLDLHTEQHGYSENYVPYLVNQDTLYGTGQLPKFAGDLFHTRPLEEEADTSNYALIPTAEVPLTNLVRGEIIDEDDLPIKMTAHTPCFRSEAGSYGRDTRGLIRMHQFDKVEMVQIVRPEDSMAALEEMTGHAEKVLQLLGLPYRKIILCTGDMGFGACKTYDLEVWIPAQNTYREISSCSNVWDFQARRMQARCRSKSDKKTRLVHTLNGSGLAVGRTLVAVMENYQQADGRIEVPEVLRPYMNGLEYIG.

237–239 (TAE) contacts L-serine. 268 to 270 (RSE) provides a ligand contact to ATP. Residue glutamate 291 participates in L-serine binding. 355 to 358 (EISS) lines the ATP pocket. Serine 391 contributes to the L-serine binding site.

This sequence belongs to the class-II aminoacyl-tRNA synthetase family. Type-1 seryl-tRNA synthetase subfamily. In terms of assembly, homodimer. The tRNA molecule binds across the dimer.

It is found in the cytoplasm. The enzyme catalyses tRNA(Ser) + L-serine + ATP = L-seryl-tRNA(Ser) + AMP + diphosphate + H(+). It carries out the reaction tRNA(Sec) + L-serine + ATP = L-seryl-tRNA(Sec) + AMP + diphosphate + H(+). Its pathway is aminoacyl-tRNA biosynthesis; selenocysteinyl-tRNA(Sec) biosynthesis; L-seryl-tRNA(Sec) from L-serine and tRNA(Sec): step 1/1. Its function is as follows. Catalyzes the attachment of serine to tRNA(Ser). Is also able to aminoacylate tRNA(Sec) with serine, to form the misacylated tRNA L-seryl-tRNA(Sec), which will be further converted into selenocysteinyl-tRNA(Sec). The sequence is that of Serine--tRNA ligase from Shigella boydii serotype 18 (strain CDC 3083-94 / BS512).